We begin with the raw amino-acid sequence, 399 residues long: MTAQTEFDEATVQDVVRLAGGHDSELRELTQKYDPAMISRLLVAEILSRCPPPSNDTPVLVELAIVHGSERFRHFLRVVRDSPIRPVGADEGFVGMLVEYELTELLRELFGVTHERPAGVRGTKLFPYLTDDEEAVEQIGTYLLAAQQGTEAVLAGCGSRKPDLSELSSRYFTPKFGFLHWFTPHYDRHFRDYRNQQVRVLEIGVGGYKHPEWGGGSLRMWKSFFPRGQIYGLDIMDKSHVDELRIRTIQGDQNDAEFLDRIARRYGPFDIVIDDGSHINAHVRTSFAALFPHVRPGGLYVIEDMWTAYWPGFGGQADPQECSGTSLGLLKSLIDAIQHQELPSDPNRSPGYVDRNIVGLHVYHNVAFVEKGRNDEGGIPTWIPRDFESLVQASSGGAT.

Residues Thr-173, Glu-202–Tyr-208, Ser-217, Asp-234, Asp-252–Gln-253, and Asp-275 each bind S-adenosyl-L-methionine. Asp-275 is a binding site for Mg(2+). The active-site Proton acceptor is His-278. Residues Glu-303 and Asp-304 each coordinate Mg(2+).

Belongs to the methyltransferase OleY/MycE family. Homotetramer. The cofactor is Mg(2+).

It carries out the reaction mycinamicin VI + S-adenosyl-L-methionine = mycinamicin III + S-adenosyl-L-homocysteine + H(+). The protein operates within antibiotic biosynthesis; mycinamicin biosynthesis. Functionally, O-methyltransferase that catalyzes the conversion of mycinamicin VI to mycinamicin III in the biosynthesis of mycinamicin, a 16-membered macrolide antibiotic. The polypeptide is Mycinamicin VI 2''-O-methyltransferase (mycE) (Micromonospora griseorubida).